The following is a 158-amino-acid chain: 6,7-dimethyl-8-ribityllumazine synthase (158 aa).

Residues Phe22, 57–59 (AVE), and 81–83 (AVI) each bind 5-amino-6-(D-ribitylamino)uracil. Residue 86-87 (GT) participates in (2S)-2-hydroxy-3-oxobutyl phosphate binding. Residue His89 is the Proton donor of the active site. Position 114 (Phe114) interacts with 5-amino-6-(D-ribitylamino)uracil. Arg128 provides a ligand contact to (2S)-2-hydroxy-3-oxobutyl phosphate.

Belongs to the DMRL synthase family. As to quaternary structure, forms an icosahedral capsid composed of 60 subunits, arranged as a dodecamer of pentamers.

The enzyme catalyses (2S)-2-hydroxy-3-oxobutyl phosphate + 5-amino-6-(D-ribitylamino)uracil = 6,7-dimethyl-8-(1-D-ribityl)lumazine + phosphate + 2 H2O + H(+). It functions in the pathway cofactor biosynthesis; riboflavin biosynthesis; riboflavin from 2-hydroxy-3-oxobutyl phosphate and 5-amino-6-(D-ribitylamino)uracil: step 1/2. Functionally, catalyzes the formation of 6,7-dimethyl-8-ribityllumazine by condensation of 5-amino-6-(D-ribitylamino)uracil with 3,4-dihydroxy-2-butanone 4-phosphate. This is the penultimate step in the biosynthesis of riboflavin. This Shewanella loihica (strain ATCC BAA-1088 / PV-4) protein is 6,7-dimethyl-8-ribityllumazine synthase.